The chain runs to 110 residues: Multidrug transporter EmrE (110 aa).

4 helical membrane-spanning segments follow: residues 4–21 (YIYL…TTLM), 34–52 (VGTI…QTLA), 58–80 (IAYA…GFFG), and 87–104 (AIIG…INLL).

This sequence belongs to the drug/metabolite transporter (DMT) superfamily. Small multidrug resistance (SMR) (TC 2.A.7.1) family. Homodimer. Forms an antiparallel dimeric structure. Also forms dimers of homodimers.

It localises to the cell inner membrane. Its activity is regulated as follows. Substrate identity influences both the ground-state and transition-state energies for the conformational exchange process, emphasizing the coupling between substrate binding and transport. Functionally, multidrug efflux protein that confers resistance to a wide range of toxic compounds, including ethidium, methyl viologen, acriflavine, tetraphenylphosphonium (TPP(+)), benzalkonium, propidium, dequalinium and the aminoglycoside antibiotics streptomycin and tobramycin. Can also transport the osmoprotectants betaine and choline. The drug efflux is coupled to an influx of protons. Can couple antiport of a drug to either one or two protons, performing both electrogenic and electroneutral transport of a single substrate. Simultaneously binds and cotransports proton and drug. This chain is Multidrug transporter EmrE (emrE), found in Escherichia coli (strain K12).